The following is a 303-amino-acid chain: Zinc transporter ZIP9 (303 aa).

The helical transmembrane segment at 7–27 (ISLLSLAMLVGCYVSGIIPLA) threads the bilayer. An N-linked (GlcNAc...) asparagine glycan is attached at Asn-29. The next 5 helical transmembrane spans lie at 35–55 (LKLV…AVIV), 102–122 (AYIG…DQIG), 142–162 (ITTT…LGAA), 172–192 (LIVF…LVSF), and 206–226 (HLLV…LGLS). Asn-237 is a glycosylation site (N-linked (GlcNAc...) asparagine). The next 2 helical transmembrane spans lie at 240 to 260 (GVAM…HVLP) and 282 to 302 (LEVC…IGHQ).

It belongs to the ZIP transporter (TC 2.A.5) family.

The protein resides in the golgi apparatus. The protein localises to the trans-Golgi network membrane. Its subcellular location is the cell membrane. It is found in the cytoplasm. It localises to the perinuclear region. The protein resides in the mitochondrion. The protein localises to the nucleus. It carries out the reaction Zn(2+)(in) = Zn(2+)(out). Its function is as follows. Transports zinc ions across cell and organelle membranes into the cytoplasm and regulates intracellular zinc homeostasis. Participates in the zinc ions efflux out of the secretory compartments. Also functions as a membrane androgen receptor that mediates, through a G protein, the non-classical androgen signaling pathway, characterized by the activation of MAPK3/MAPK1 (Erk1/2) and transcription factors CREB1 or ATF1. Moreover, has dual functions as a membrane-bound androgen receptor and as an androgen-dependent zinc transporter both of which are mediated through an inhibitory G protein (Gi) that mediates both MAP kinase and zinc signaling leading to the androgen-dependent apoptotic process. The protein is Zinc transporter ZIP9 of Xenopus tropicalis (Western clawed frog).